The chain runs to 541 residues: Metal transporter Nramp6 (541 aa).

Over residues M1–P18 the composition is skewed to low complexity. The disordered stretch occupies residues M1–A44. Transmembrane regions (helical) follow at residues L87–L107, T120–A140, V172–L192, F196–L216, L224–T244, A270–V290, I316–F336, F358–Q378, I404–F424, W436–V456, V474–F494, and L502–I522.

The protein belongs to the NRAMP (TC 2.A.55) family.

The protein localises to the membrane. Probable metal transporter. The polypeptide is Metal transporter Nramp6 (NRAMP6) (Oryza sativa subsp. japonica (Rice)).